A 195-amino-acid polypeptide reads, in one-letter code: ATP-dependent Clp protease proteolytic subunit (195 aa).

Residue serine 97 is the Nucleophile of the active site. The active site involves histidine 122.

Belongs to the peptidase S14 family. As to quaternary structure, fourteen ClpP subunits assemble into 2 heptameric rings which stack back to back to give a disk-like structure with a central cavity, resembling the structure of eukaryotic proteasomes.

It is found in the cytoplasm. It carries out the reaction Hydrolysis of proteins to small peptides in the presence of ATP and magnesium. alpha-casein is the usual test substrate. In the absence of ATP, only oligopeptides shorter than five residues are hydrolyzed (such as succinyl-Leu-Tyr-|-NHMec, and Leu-Tyr-Leu-|-Tyr-Trp, in which cleavage of the -Tyr-|-Leu- and -Tyr-|-Trp bonds also occurs).. Its function is as follows. Cleaves peptides in various proteins in a process that requires ATP hydrolysis. Has a chymotrypsin-like activity. Plays a major role in the degradation of misfolded proteins. This chain is ATP-dependent Clp protease proteolytic subunit, found in Lactobacillus gasseri (strain ATCC 33323 / DSM 20243 / BCRC 14619 / CIP 102991 / JCM 1131 / KCTC 3163 / NCIMB 11718 / NCTC 13722 / AM63).